Consider the following 178-residue polypeptide: Ribosome maturation factor RimM (178 aa).

In terms of domain architecture, PRC barrel spans 101–178 (ADEYYWYQLV…VMRVEWDADF (78 aa)).

Belongs to the RimM family. In terms of assembly, binds ribosomal protein uS19.

It is found in the cytoplasm. An accessory protein needed during the final step in the assembly of 30S ribosomal subunit, possibly for assembly of the head region. Essential for efficient processing of 16S rRNA. May be needed both before and after RbfA during the maturation of 16S rRNA. It has affinity for free ribosomal 30S subunits but not for 70S ribosomes. This chain is Ribosome maturation factor RimM, found in Pseudomonas putida (strain GB-1).